A 65-amino-acid chain; its full sequence is Large ribosomal subunit protein bL28 (65 aa).

Residues 1 to 26 (MARRDDLTNKGPMSGNKRSHALNATK) form a disordered region. Over residues 17-26 (KRSHALNATK) the composition is skewed to basic residues.

This sequence belongs to the bacterial ribosomal protein bL28 family.

In Mycoplasma mobile (strain ATCC 43663 / 163K / NCTC 11711) (Mesomycoplasma mobile), this protein is Large ribosomal subunit protein bL28.